We begin with the raw amino-acid sequence, 1231 residues long: Protein FAM193A (1231 aa).

A coiled-coil region spans residues 106–142; the sequence is CTEDMYSTLLQRYQRSEEELRKVAEEWLECQKRIDAY. A disordered region spans residues 249 to 272; the sequence is DYLSEMRPPSVSSASSGSGSSSPI. Low complexity predominate over residues 258–270; sequence SVSSASSGSGSSS. Ser293 is modified (phosphoserine). Disordered regions lie at residues 331 to 405, 633 to 703, 719 to 789, 826 to 845, and 860 to 1174; these read NGGG…QAEQ, QSSS…APSF, SFCP…NQKE, LTKRKEEQPKKMEQISEREG, and NSSE…SSLD. The span at 355-365 shows a compositional bias: acidic residues; sequence EADDEDADGES. At Ser648 the chain carries Phosphoserine. A compositionally biased stretch (low complexity) spans 676 to 691; the sequence is LAPLPALSPSALSPAS. The span at 761 to 773 shows a compositional bias: acidic residues; sequence QQDDGDESADEDS. The segment covering 776 to 785 has biased composition (low complexity); the sequence is EHSSSTSTST. The span at 872-881 shows a compositional bias: basic residues; it reads AAKRARHKQR. Positions 877–973 form a coiled coil; the sequence is RHKQRKLEEK…ATESISNSEN (97 aa). The segment covering 882–909 has biased composition (basic and acidic residues); sequence KLEEKARLEAEARAREHLHHQEEQKQRE. The span at 910 to 920 shows a compositional bias: acidic residues; the sequence is EEEDEEEEDEE. Residues 921 to 935 show a composition bias toward basic and acidic residues; sequence QHFKEEFQRLQELQK. Positions 937 to 946 are enriched in basic residues; the sequence is RAAKKKKKDR. Positions 962–979 are enriched in polar residues; that stretch reads QAATESISNSENIHNGSL. Residues Ser1136 and Ser1151 each carry the phosphoserine modification. Over residues 1156 to 1166 the composition is skewed to basic residues; the sequence is GKNKKNKKKKG.

The protein belongs to the FAM193 family.

The chain is Protein FAM193A (Fam193a) from Mus musculus (Mouse).